We begin with the raw amino-acid sequence, 193 residues long: Potassium-transporting ATPase KdpC subunit (193 aa).

The chain crosses the membrane as a helical span at residues 9–29; that stretch reads VLMTVVTTVLLGLVYPLLITG.

This sequence belongs to the KdpC family. The system is composed of three essential subunits: KdpA, KdpB and KdpC.

Its subcellular location is the cell inner membrane. Part of the high-affinity ATP-driven potassium transport (or Kdp) system, which catalyzes the hydrolysis of ATP coupled with the electrogenic transport of potassium into the cytoplasm. This subunit acts as a catalytic chaperone that increases the ATP-binding affinity of the ATP-hydrolyzing subunit KdpB by the formation of a transient KdpB/KdpC/ATP ternary complex. The protein is Potassium-transporting ATPase KdpC subunit of Koribacter versatilis (strain Ellin345).